The sequence spans 423 residues: Glutamate-1-semialdehyde 2,1-aminomutase (423 aa).

At K266 the chain carries N6-(pyridoxal phosphate)lysine.

This sequence belongs to the class-III pyridoxal-phosphate-dependent aminotransferase family. HemL subfamily. Homodimer. The cofactor is pyridoxal 5'-phosphate.

The protein resides in the cytoplasm. The enzyme catalyses (S)-4-amino-5-oxopentanoate = 5-aminolevulinate. The protein operates within porphyrin-containing compound metabolism; protoporphyrin-IX biosynthesis; 5-aminolevulinate from L-glutamyl-tRNA(Glu): step 2/2. In Nitratidesulfovibrio vulgaris (strain ATCC 29579 / DSM 644 / CCUG 34227 / NCIMB 8303 / VKM B-1760 / Hildenborough) (Desulfovibrio vulgaris), this protein is Glutamate-1-semialdehyde 2,1-aminomutase.